Reading from the N-terminus, the 376-residue chain is MVPGIHRPAVVKVNLGAIKRNIENEMQHLEPGQKMLAVVKANGYGHGAVEVAKVADQIGAAGFCVAILDEALELRRADITKTILVLGVVSPEYAPIAAANDISLTVPNLEWLKEAEKYLENSDLQLKIHLGIDSGMGRIGFNEDKDFIAANKFLENNDNFYIEGMFAHFASADSSDETYFKHQCEKFNHMKSLLTVKPKWIHVDNTAASIFHNGIKSDLVRFGIGIYGLNPSSNPNSPDLKSKIALDPALSFESELTHVKTIHQGDGVGYGSTFVADKDTIIGTVPVGYADGFIRKFQGFKVKVGNTYCPIVGRICMDQFMVEMPKEMPLGTKVVIISDNPDDLNNIKAAADYVDTIHYEVACLLNDRLPRVYYED.

Residue K40 is the Proton acceptor; specific for D-alanine of the active site. An N6-(pyridoxal phosphate)lysine modification is found at K40. R138 is a substrate binding site. The active-site Proton acceptor; specific for L-alanine is Y270. M317 lines the substrate pocket.

The protein belongs to the alanine racemase family. Requires pyridoxal 5'-phosphate as cofactor.

It catalyses the reaction L-alanine = D-alanine. It participates in amino-acid biosynthesis; D-alanine biosynthesis; D-alanine from L-alanine: step 1/1. Its function is as follows. Catalyzes the interconversion of L-alanine and D-alanine. May also act on other amino acids. The sequence is that of Alanine racemase (alr) from Lactobacillus gasseri (strain ATCC 33323 / DSM 20243 / BCRC 14619 / CIP 102991 / JCM 1131 / KCTC 3163 / NCIMB 11718 / NCTC 13722 / AM63).